Reading from the N-terminus, the 489-residue chain is Phosphoenolpyruvate carboxykinase (ATP) (489 aa).

2 residues coordinate substrate: arginine 53 and tyrosine 159. Residues histidine 185, 208–216 (GLSGTGKTT), aspartate 258, arginine 300, 409–410 (KI), and serine 415 contribute to the ATP site. Residue arginine 300 coordinates substrate.

It belongs to the phosphoenolpyruvate carboxykinase (ATP) family.

Its subcellular location is the cytoplasm. It catalyses the reaction oxaloacetate + ATP = phosphoenolpyruvate + ADP + CO2. Its pathway is carbohydrate biosynthesis; gluconeogenesis. Functionally, involved in the gluconeogenesis. Catalyzes the conversion of oxaloacetate (OAA) to phosphoenolpyruvate (PEP) through direct phosphoryl transfer between the nucleoside triphosphate and OAA. This chain is Phosphoenolpyruvate carboxykinase (ATP), found in Aeropyrum pernix (strain ATCC 700893 / DSM 11879 / JCM 9820 / NBRC 100138 / K1).